Reading from the N-terminus, the 348-residue chain is Ethanol acetyltransferase 2 (348 aa).

The transit peptide at Met1–Pro19 directs the protein to the mitochondrion. The AB hydrolase-1 domain occupies Ile49–Ile305. Residues Ser121, Asp145, and His294 each act as charge relay system in the active site.

The protein belongs to the AB hydrolase superfamily.

The protein resides in the mitochondrion. It catalyses the reaction ethanol + acetyl-CoA = ethyl acetate + CoA. The catalysed reaction is acetyl-CoA + H2O = acetate + CoA + H(+). The enzyme catalyses ethyl acetate + H2O = ethanol + acetate + H(+). Functionally, alcohol acetyltransferase that catalyzes the synthesis of ethyl acetate from ethanol and acetyl-CoA. Can also function as a thioesterase by hydrolyzing acetyl-CoA in the absence of ethanol, as well as esterase hydrolyzing ethyl acetate. The sequence is that of Ethanol acetyltransferase 2 (EAT2) from Hanseniaspora uvarum (Yeast).